The chain runs to 346 residues: Acetylserotonin O-methyltransferase (346 aa).

Residues Tyr-148, Trp-165, Asp-211, 236 to 238 (GDF), and Lys-253 contribute to the S-adenosyl-L-methionine site. The active-site Proton donor/acceptor is the His-256. 3 residues coordinate substrate: Asp-257, Asn-303, and Gln-307.

It belongs to the class I-like SAM-binding methyltransferase superfamily. Cation-independent O-methyltransferase family. In terms of assembly, homodimer. As to expression, expressed in pineal gland and retina.

The catalysed reaction is N-acetylserotonin + S-adenosyl-L-methionine = melatonin + S-adenosyl-L-homocysteine + H(+). Its pathway is aromatic compound metabolism; melatonin biosynthesis; melatonin from serotonin: step 1/2. Its function is as follows. Catalyzes the transfer of a methyl group onto N-acetylserotonin, producing melatonin (N-acetyl-5-methoxytryptamine). In Gallus gallus (Chicken), this protein is Acetylserotonin O-methyltransferase (ASMT).